A 106-amino-acid polypeptide reads, in one-letter code: Small ribosomal subunit protein bS18 (106 aa).

Residues 1–32 (MRWMKIMSEDMKQEQSGEGRGGRGGPARPLAS) form a disordered region. Positions 7-21 (MSEDMKQEQSGEGRG) are enriched in basic and acidic residues.

It belongs to the bacterial ribosomal protein bS18 family. In terms of assembly, part of the 30S ribosomal subunit. Forms a tight heterodimer with protein bS6.

In terms of biological role, binds as a heterodimer with protein bS6 to the central domain of the 16S rRNA, where it helps stabilize the platform of the 30S subunit. This Magnetococcus marinus (strain ATCC BAA-1437 / JCM 17883 / MC-1) protein is Small ribosomal subunit protein bS18.